Here is a 690-residue protein sequence, read N- to C-terminus: Eukaryotic translation initiation factor 3 subunit B (690 aa).

Basic and acidic residues predominate over residues 1–11 (MAKKKSEEHSG). Residues 1-33 (MAKKKSEEHSGTDANDSDYQEEPNFDDPPGFVD) form a disordered region. Residues 15-25 (NDSDYQEEPNF) show a composition bias toward acidic residues. Positions 57 to 141 (SVVVVDNIPK…HTFAVNLFTD (85 aa)) constitute an RRM domain. WD repeat units lie at residues 207–246 (TRER…KIQK), 293–331 (DGMS…LLDL), 334–369 (IKIP…TLME), 442–484 (EIRE…KPSL), and 530–575 (PDHF…IKRT). The stretch at 595–645 (EEKQKEIKKNLKKYYAAFEQKDRLRLTRASKELLEKRSQLRETFMEYRNKR) forms a coiled coil.

The protein belongs to the eIF-3 subunit B family. In terms of assembly, component of the eukaryotic translation initiation factor 3 (eIF-3) complex. The eIF-3 complex interacts with pix. Interacts with mxt.

The protein resides in the cytoplasm. Functionally, RNA-binding component of the eukaryotic translation initiation factor 3 (eIF-3) complex, which is involved in protein synthesis of a specialized repertoire of mRNAs and, together with other initiation factors, stimulates binding of mRNA and methionyl-tRNAi to the 40S ribosome. The eIF-3 complex specifically targets and initiates translation of a subset of mRNAs involved in cell proliferation. The protein is Eukaryotic translation initiation factor 3 subunit B of Drosophila melanogaster (Fruit fly).